A 603-amino-acid chain; its full sequence is Autophagy-related protein 13a (603 aa).

Ser248 is modified (phosphoserine). 2 disordered regions span residues 258–477 and 498–518; these read PSPG…DDLD and SHSLDRRKTSSSISQSLPLGR. Residues 301 to 315 show a composition bias toward polar residues; that stretch reads ATPNQSFSPAQSHQL. A compositionally biased stretch (basic and acidic residues) spans 320–331; sequence HDFHWSRTDAFG. Composition is skewed to polar residues over residues 371–386 and 419–437; these read IPSSATLNRYVSSNFS and SSRSGESPSGLMNQYPTQK. A compositionally biased stretch (low complexity) spans 453–473; it reads LSSSDSPRFAFSRSPSRLSSQ.

This sequence belongs to the ATG13 family. Plant subfamily. As to quaternary structure, interacts with ATG1A. Interacts with ATG11 and ATG101. Phosphorylated during nutrient starvation. Dephosphorylated in nutrient-rich conditions.

It localises to the cytoplasmic vesicle. The protein resides in the autophagosome. Functionally, involved in autophagy in a nutritional condition dependent manner. The ATG1-ATG13 protein kinase complex regulates downstream events required for autophagosome enclosure and/or vacuolar delivery. Becomes a target of autophagy under nutrient starvation. Connects autophagy to plant nutritional status. The chain is Autophagy-related protein 13a from Arabidopsis thaliana (Mouse-ear cress).